Reading from the N-terminus, the 57-residue chain is Protein translocase subunit SecE (57 aa).

The helical transmembrane segment at 30-50 threads the bilayer; the sequence is LIAGAGIVFVGFLGFLIFAIM.

The protein belongs to the SecE/SEC61-gamma family. Component of the Sec protein translocase complex. Heterotrimer consisting of SecY (alpha), SecG (beta) and SecE (gamma) subunits. The heterotrimers can form oligomers, although 1 heterotrimer is thought to be able to translocate proteins. Interacts with the ribosome. May interact with SecDF, and other proteins may be involved.

The protein resides in the cell membrane. Functionally, essential subunit of the Sec protein translocation channel SecYEG. Clamps together the 2 halves of SecY. May contact the channel plug during translocation. The protein is Protein translocase subunit SecE of Haloquadratum walsbyi (strain DSM 16790 / HBSQ001).